The sequence spans 160 residues: Nucleotide-binding protein MADE_1020535 (160 aa).

Belongs to the YajQ family.

Its function is as follows. Nucleotide-binding protein. The polypeptide is Nucleotide-binding protein MADE_1020535 (Alteromonas mediterranea (strain DSM 17117 / CIP 110805 / LMG 28347 / Deep ecotype)).